A 318-amino-acid polypeptide reads, in one-letter code: Glutathione synthetase (318 aa).

Residues 125 to 311 form the ATP-grasp domain; sequence EKLFTAWFPE…ITGKLMDAIE (187 aa). Position 151-208 (151-208) interacts with ATP; sequence FRQEHGDIILKPLDGMGGASIFRVKENDPNVSVIIETLTNHGQNYAMAQTFVPDISNG. 2 residues coordinate Mg(2+): glutamate 282 and asparagine 284.

Belongs to the prokaryotic GSH synthase family. It depends on Mg(2+) as a cofactor. Mn(2+) serves as cofactor.

The catalysed reaction is gamma-L-glutamyl-L-cysteine + glycine + ATP = glutathione + ADP + phosphate + H(+). Its pathway is sulfur metabolism; glutathione biosynthesis; glutathione from L-cysteine and L-glutamate: step 2/2. In Vibrio vulnificus (strain YJ016), this protein is Glutathione synthetase.